An 882-amino-acid chain; its full sequence is Valine--tRNA ligase (882 aa).

Residues 42-52 (PNVTGKLHLGH) carry the 'HIGH' region motif. Residues 522–526 (KMSKS) carry the 'KMSKS' region motif. Lys525 lines the ATP pocket. A coiled-coil region spans residues 849-873 (KIEIEKKKYESYCKQYKKLLESKNN).

This sequence belongs to the class-I aminoacyl-tRNA synthetase family. ValS type 1 subfamily. As to quaternary structure, monomer.

It localises to the cytoplasm. The catalysed reaction is tRNA(Val) + L-valine + ATP = L-valyl-tRNA(Val) + AMP + diphosphate. Functionally, catalyzes the attachment of valine to tRNA(Val). As ValRS can inadvertently accommodate and process structurally similar amino acids such as threonine, to avoid such errors, it has a 'posttransfer' editing activity that hydrolyzes mischarged Thr-tRNA(Val) in a tRNA-dependent manner. The polypeptide is Valine--tRNA ligase (Onion yellows phytoplasma (strain OY-M)).